Reading from the N-terminus, the 556-residue chain is Sesquiterpene synthase 2 (556 aa).

Mg(2+) contacts are provided by aspartate 309, aspartate 313, aspartate 453, and glutamate 461. Residues aspartate 309 to aspartate 313 carry the DDXXD motif motif.

Belongs to the terpene synthase family. Tpsa subfamily. It depends on Mg(2+) as a cofactor. Mn(2+) is required as a cofactor. Mostly expressed in roots and mature leaflets and, to a lower extent, in rachis and developing leaflets.

The catalysed reaction is (2E,6E)-farnesyl diphosphate = alpha-humulene + diphosphate. The enzyme catalyses (2E,6E)-farnesyl diphosphate = alpha-selinene + diphosphate. It catalyses the reaction (2E,6E)-farnesyl diphosphate = delta-cadinene + diphosphate. It carries out the reaction (2E,6E)-farnesyl diphosphate = (1S,2S,4R)-beta-elemene + diphosphate. It participates in secondary metabolite biosynthesis; terpenoid biosynthesis. Functionally, sesquiterpene synthase involved in the biosynthesis of volatile compounds known for their medicinal efficacy for treating enteritis, dysentery, itch and some cancers. Mediates the conversion of (2E,6E)-farnesyl diphosphate (FPP) into beta-elemene, alpha-humulene, delta-cadinene and alpha-selinene. In Toona sinensis (Chinese mahogany), this protein is Sesquiterpene synthase 2.